The chain runs to 99 residues: DNA-directed RNA polymerase subunit Rpo11 (99 aa).

Belongs to the archaeal Rpo11/eukaryotic RPB11/RPC19 RNA polymerase subunit family. As to quaternary structure, part of the RNA polymerase complex.

The protein localises to the cytoplasm. It carries out the reaction RNA(n) + a ribonucleoside 5'-triphosphate = RNA(n+1) + diphosphate. Its function is as follows. DNA-dependent RNA polymerase (RNAP) catalyzes the transcription of DNA into RNA using the four ribonucleoside triphosphates as substrates. The chain is DNA-directed RNA polymerase subunit Rpo11 from Aeropyrum pernix (strain ATCC 700893 / DSM 11879 / JCM 9820 / NBRC 100138 / K1).